A 383-amino-acid chain; its full sequence is MNLGKQLTLPAVAVVASVVLLGCERPPPEVVQKGYRGVAMEQNYNPRLLEASIKANLPVESLPAAAPGGPSVSDVYENVQVLKDLSVAEFTRTMVAVTTWVAPKEGCNYCHVPGNWASDDIYTKVVSRRMFELVRATNSNWKDHVAETGVTCYTCHRGNPVPKYVWVTDPGPNQPSGVTPTGQNYASSTVAYSALPLDPYTPFLDQSNEIRVIGQTALPAGNTTSLKQAEWTYGLMMQISDSLGVNCTFCHNSRSFYDWKQSTPQRTTAWYAIRHVRDINQNYIWPLNDALPASRKGPYGDPFKVGCMTCHQGAYKPLYGAQMAKDYPALYESAPAEAAPATEEAPAAEAEAVEAAPVEEAAPAPVEQAAAPVEDAAPAPQQL.

Positions 1 to 22 (MNLGKQLTLPAVAVVASVVLLG) are cleaved as a signal peptide. A lipid anchor (N-palmitoyl cysteine) is attached at Cys23. The S-diacylglycerol cysteine moiety is linked to residue Cys23. Positions 94, 107, 110, 111, 130, 144, 152, 155, 156, 236, 247, 250, 251, 307, 310, and 311 each coordinate heme. The tract at residues 335-383 (PAEAAPATEEAPAAEAEAVEAAPVEEAAPAPVEQAAAPVEDAAPAPQQL) is disordered.

As to quaternary structure, component of the photosynthetic reaction center composed of protein subunits L (PufL), M (PufM), H (PuhA) and cytochrome C (PufC). The reaction center interacts with light-harvesting antenna complex LH1. Binds 4 heme groups per subunit.

It is found in the cellular chromatophore membrane. Its function is as follows. The reaction center of purple bacteria contains a tightly bound cytochrome molecule which re-reduces the photo oxidized primary electron donor. This Allochromatium vinosum (strain ATCC 17899 / DSM 180 / NBRC 103801 / NCIMB 10441 / D) (Chromatium vinosum) protein is Photosynthetic reaction center cytochrome c subunit (pufC).